The following is a 756-amino-acid chain: Serine/threonine-protein kinase CBK1 (756 aa).

Disordered regions lie at residues 1 to 180 (MYNS…SYSS) and 242 to 261 (QQQQQQQSQSPVQSGFNNGT). Residues 23–34 (QQQDQQHQQQQQ) show a composition bias toward low complexity. A compositionally biased stretch (polar residues) spans 53–77 (FSSNYMKEQGSHQSLQEHLQRETGN). Threonine 109 carries the post-translational modification Phosphothreonine. Residues 120–180 (HNNNSQSMVQ…TLRSNGSYSS (61 aa)) show a composition bias toward polar residues. A compositionally biased stretch (low complexity) spans 242-255 (QQQQQQQSQSPVQS). In terms of domain architecture, Protein kinase spans 352 to 672 (FHTVKVIGKG…ADEIKSHPFF (321 aa)). ATP contacts are provided by residues 358–366 (IGKGAFGEV) and lysine 381. Catalysis depends on aspartate 475, which acts as the Proton acceptor. Residues 673-754 (RGVDWNTIRQ…SRFDYLTRKN (82 aa)) form the AGC-kinase C-terminal domain. A disordered region spans residues 707 to 732 (NVPDSPAMAQAAKQREQMTKQGGSAP).

Belongs to the protein kinase superfamily. STE Ser/Thr protein kinase family. COT1 subfamily. In terms of assembly, associates with PAG1/TAO3 and interacts with MOB2.

It carries out the reaction L-seryl-[protein] + ATP = O-phospho-L-seryl-[protein] + ADP + H(+). The enzyme catalyses L-threonyl-[protein] + ATP = O-phospho-L-threonyl-[protein] + ADP + H(+). Its function is as follows. Protein kinase that seems to play a role in the regulation of cell morphogenesis and proliferation. The polypeptide is Serine/threonine-protein kinase CBK1 (CBK1) (Saccharomyces cerevisiae (strain ATCC 204508 / S288c) (Baker's yeast)).